Here is a 185-residue protein sequence, read N- to C-terminus: Peptidyl-tRNA hydrolase (185 aa).

Position 14 (tyrosine 14) interacts with tRNA. Catalysis depends on histidine 19, which acts as the Proton acceptor. Positions 63, 65, and 111 each coordinate tRNA.

The protein belongs to the PTH family. In terms of assembly, monomer.

It is found in the cytoplasm. The catalysed reaction is an N-acyl-L-alpha-aminoacyl-tRNA + H2O = an N-acyl-L-amino acid + a tRNA + H(+). Its function is as follows. Hydrolyzes ribosome-free peptidyl-tRNAs (with 1 or more amino acids incorporated), which drop off the ribosome during protein synthesis, or as a result of ribosome stalling. In terms of biological role, catalyzes the release of premature peptidyl moieties from peptidyl-tRNA molecules trapped in stalled 50S ribosomal subunits, and thus maintains levels of free tRNAs and 50S ribosomes. This Desulfitobacterium hafniense (strain Y51) protein is Peptidyl-tRNA hydrolase.